Here is a 446-residue protein sequence, read N- to C-terminus: ATP-dependent protease ATPase subunit HslU (446 aa).

Residues I17, 59–64, D255, E320, and R392 each bind ATP; that span reads GVGKTE.

This sequence belongs to the ClpX chaperone family. HslU subfamily. As to quaternary structure, a double ring-shaped homohexamer of HslV is capped on each side by a ring-shaped HslU homohexamer. The assembly of the HslU/HslV complex is dependent on binding of ATP.

It is found in the cytoplasm. Its function is as follows. ATPase subunit of a proteasome-like degradation complex; this subunit has chaperone activity. The binding of ATP and its subsequent hydrolysis by HslU are essential for unfolding of protein substrates subsequently hydrolyzed by HslV. HslU recognizes the N-terminal part of its protein substrates and unfolds these before they are guided to HslV for hydrolysis. The protein is ATP-dependent protease ATPase subunit HslU of Pseudomonas fluorescens (strain ATCC BAA-477 / NRRL B-23932 / Pf-5).